A 190-amino-acid polypeptide reads, in one-letter code: Protein A52 (190 aa).

Belongs to the orthopoxvirus A52R protein family. Interacts with host TRAF6 and IRAK2.

Bcl-2-like protein which targets host toll-like receptor signaling complexes to suppress innate immune response. Interacts with host TRAF6 to activate p38 and subsequently induce the expression of several cytokines such as IL-10. Also associates with host IRAK2 to inhibit NF-kappa-B signaling. This is Protein A52 from Vaccinia virus (strain Western Reserve) (VACV).